Reading from the N-terminus, the 88-residue chain is Protein transport protein SBH2 (88 aa).

Residues 1-42 (MAASVPPGGQRILQKRRQAQSIKEKQAKQTPTSTRQAGYGGS) are disordered. Over 1–61 (MAASVPPGGQ…DEANGFRVDS (61 aa)) the chain is Cytoplasmic. Residues 28–42 (KQTPTSTRQAGYGGS) show a composition bias toward polar residues. Residues 62-82 (LVVLFLSVGFIFSVIALHLLT) form a helical membrane-spanning segment.

This sequence belongs to the SEC61-beta family. In terms of assembly, component of the heterotrimeric Ssh1 complex, which is composed of SSH1, SBH2 and SSS1.

It is found in the endoplasmic reticulum membrane. Part of the Ssh1 complex, which probably is the major component of a channel-forming translocon complex that may function exclusively in the cotranslational pathway of protein endoplasmic reticulum (ER) import. In Saccharomyces cerevisiae (strain ATCC 204508 / S288c) (Baker's yeast), this protein is Protein transport protein SBH2 (SBH2).